The following is a 266-amino-acid chain: Undecaprenyl-diphosphatase (266 aa).

8 consecutive transmembrane segments (helical) span residues 1 to 21 (MDFL…FIPV), 39 to 59 (PGSS…FWYF), 86 to 106 (SIFI…LFVT), 117 to 137 (FSIA…DIST), 153 to 173 (FIGI…GATI), 190 to 210 (SFLL…ITSI), 216 to 236 (FPFL…LLAI), and 246 to 266 (NGLK…ILNL).

Belongs to the UppP family.

The protein localises to the cell inner membrane. It carries out the reaction di-trans,octa-cis-undecaprenyl diphosphate + H2O = di-trans,octa-cis-undecaprenyl phosphate + phosphate + H(+). Functionally, catalyzes the dephosphorylation of undecaprenyl diphosphate (UPP). Confers resistance to bacitracin. In Prochlorococcus marinus (strain MIT 9515), this protein is Undecaprenyl-diphosphatase.